The chain runs to 174 residues: Mediator of RNA polymerase II transcription subunit 30 (174 aa).

A coiled-coil region spans residues 113 to 166; it reads VEDDSSKLEDRMANQLRAASEERREVLEVNKKLKQKNQQLKMIMDQLRNLIWEI.

Belongs to the Mediator complex subunit 30 family. As to quaternary structure, component of the Mediator complex.

It is found in the nucleus. Functionally, component of the Mediator complex, a coactivator involved in the regulated transcription of nearly all RNA polymerase II-dependent genes. Mediator functions as a bridge to convey information from gene-specific regulatory proteins to the basal RNA polymerase II transcription machinery. Mediator is recruited to promoters by direct interactions with regulatory proteins and serves as a scaffold for the assembly of a functional preinitiation complex with RNA polymerase II and the general transcription factors. This chain is Mediator of RNA polymerase II transcription subunit 30 (med30), found in Danio rerio (Zebrafish).